Consider the following 62-residue polypeptide: Photosystem II reaction center protein Z (62 aa).

A run of 2 helical transmembrane segments spans residues 8–28 and 41–61; these read AVFA…LVFA and FSGT…NSLI.

It belongs to the PsbZ family. In terms of assembly, PSII is composed of 1 copy each of membrane proteins PsbA, PsbB, PsbC, PsbD, PsbE, PsbF, PsbH, PsbI, PsbJ, PsbK, PsbL, PsbM, PsbT, PsbY, PsbZ, Psb30/Ycf12, at least 3 peripheral proteins of the oxygen-evolving complex and a large number of cofactors. It forms dimeric complexes.

The protein resides in the plastid. It is found in the chloroplast thylakoid membrane. Its function is as follows. May control the interaction of photosystem II (PSII) cores with the light-harvesting antenna, regulates electron flow through the 2 photosystem reaction centers. PSII is a light-driven water plastoquinone oxidoreductase, using light energy to abstract electrons from H(2)O, generating a proton gradient subsequently used for ATP formation. In Hordeum vulgare (Barley), this protein is Photosystem II reaction center protein Z.